The sequence spans 211 residues: MTRIADLRRDYRRQRLLESDAAEDPIEQFRLWLTDAVNAELPEPNAMTLATVGLDGMPAARLVLLKEVDDRGFVFFTNYRSRKGRELAAHPKAALVFWWAELERQVRIEGNVEQISAAESDAYFQSRPLGSRWGAWASQQSEVLASYAELEARLAAVEAHYGENVPRPEHWGGYRVLPTLIEFWQGRPNRLHDRLCYRRQGDHWQRVRLYP.

Substrate contacts are provided by residues 8–11 (RRDY) and Lys66. Residues 61 to 66 (RLVLLK), 76 to 77 (FT), Arg82, Lys83, and Gln105 contribute to the FMN site. Positions 123, 127, and 131 each coordinate substrate. FMN-binding positions include 140 to 141 (QS) and Trp184. 190 to 192 (RLH) lines the substrate pocket. Position 194 (Arg194) interacts with FMN.

This sequence belongs to the pyridoxamine 5'-phosphate oxidase family. Homodimer. Requires FMN as cofactor.

It catalyses the reaction pyridoxamine 5'-phosphate + O2 + H2O = pyridoxal 5'-phosphate + H2O2 + NH4(+). It carries out the reaction pyridoxine 5'-phosphate + O2 = pyridoxal 5'-phosphate + H2O2. It functions in the pathway cofactor metabolism; pyridoxal 5'-phosphate salvage; pyridoxal 5'-phosphate from pyridoxamine 5'-phosphate: step 1/1. Its pathway is cofactor metabolism; pyridoxal 5'-phosphate salvage; pyridoxal 5'-phosphate from pyridoxine 5'-phosphate: step 1/1. Its function is as follows. Catalyzes the oxidation of either pyridoxine 5'-phosphate (PNP) or pyridoxamine 5'-phosphate (PMP) into pyridoxal 5'-phosphate (PLP). In Thermosynechococcus vestitus (strain NIES-2133 / IAM M-273 / BP-1), this protein is Pyridoxine/pyridoxamine 5'-phosphate oxidase.